The following is a 257-amino-acid chain: Probable enoyl-CoA hydratase echA17 (257 aa).

It belongs to the enoyl-CoA hydratase/isomerase family.

It catalyses the reaction a (3S)-3-hydroxyacyl-CoA = a (2E)-enoyl-CoA + H2O. The enzyme catalyses a 4-saturated-(3S)-3-hydroxyacyl-CoA = a (3E)-enoyl-CoA + H2O. Could possibly oxidize fatty acids using specific components. The protein is Probable enoyl-CoA hydratase echA17 (echA17) of Mycolicibacterium paratuberculosis (strain ATCC BAA-968 / K-10) (Mycobacterium paratuberculosis).